Here is a 364-residue protein sequence, read N- to C-terminus: Alanine racemase (364 aa).

Lys-34 functions as the Proton acceptor; specific for D-alanine in the catalytic mechanism. An N6-(pyridoxal phosphate)lysine modification is found at Lys-34. Arg-129 lines the substrate pocket. Residue Tyr-259 is the Proton acceptor; specific for L-alanine of the active site. Met-307 lines the substrate pocket.

Belongs to the alanine racemase family. Requires pyridoxal 5'-phosphate as cofactor.

The enzyme catalyses L-alanine = D-alanine. It participates in amino-acid biosynthesis; D-alanine biosynthesis; D-alanine from L-alanine: step 1/1. Catalyzes the interconversion of L-alanine and D-alanine. May also act on other amino acids. This Coxiella burnetii (strain RSA 493 / Nine Mile phase I) protein is Alanine racemase (alr).